A 348-amino-acid chain; its full sequence is Nuclear receptor subfamily 1 group I member 3 (348 aa).

The nuclear receptor DNA-binding region spans 8-83; the sequence is PRSCMVCGDR…AGMKKEMILS (76 aa). Residues 11–31 form an NR C4-type zinc finger; sequence CMVCGDRATGYHFHALTCEGC. Threonine 38 bears the Phosphothreonine; by PKC mark. The segment at 47–71 adopts an NR C4-type zinc-finger fold; sequence CPFAGNCKVNKAQRRHCPACRLQKC. The region spanning 109–348 is the NR LBD domain; sequence GQQELVQTLL…MMPLLQEICS (240 aa).

The protein belongs to the nuclear hormone receptor family. NR1 subfamily. As to quaternary structure, heterodimer of NR1I3 and RXR. Interacts with PSMC4. Interacts with ECT2. Directly interacts with DNAJC7; this complex may also include HSP90. Interacts with CRY1. Interacts with CRY2 in a ligand-dependent manner. Phosphorylated at Thr-38 by PKC, dephosphorylation of Thr-38 is required for nuclear translocation and activation.

It is found in the nucleus. The protein resides in the cytoplasm. It localises to the cytoskeleton. Binds and transactivates the retinoic acid response elements that control expression of the retinoic acid receptor beta 2 and alcohol dehydrogenase 3 genes. Transactivates both the phenobarbital responsive element module of the human CYP2B6 gene and the CYP3A4 xenobiotic response element. In Callorhinus ursinus (Northern fur seal), this protein is Nuclear receptor subfamily 1 group I member 3 (NR1I3).